The following is a 959-amino-acid chain: MEPPLELPTQRKRVIPSKFGILKRNAEIEAEKNRENLQQSSCFSHINEIGKEIGLEIWKIIDDSTIQKVPKVNHSTFETNKSYLLLMGQFYDGNMNIKTYNIHFWIGELLINSQETINFCNDRIEELERIIKYNQKQFDSEQFYPEPILYREFQGKEGDIFMSYFKSYGGPRYVAPLKLTSASAAIATAAKQYKLFHLKGRRNIRVKQVDISSKSLNSGDVFVLDCEDFIYQWNGSESSRLEKGKGLDLTIRLRDEKSAKAKIIVMDENDTDKDHPEFWKRLGGCKDDVQKAEQGGDDFAYEKKSVEQIKLYQVENLNYEVHLHLIDPIGDVYSTTQLNAEFCYILDCETELYVWLGKASANDQRTVAMANAMDLLHEDNRPSWTPIIKMTQGSENTLFKDKFKKGSWGEYVNDNFEKKPITGKGVAAKAVQEKINVDALHNPEKYQLSKEERKSTIPTLHHVDDKHRGELKIWHVRNRNKFEISQSEFGLFYNQSCYLVLFTLFAADGSNNSILYYWQGRFSSSEDKGAAALLAKDVGKELHRSCIHVRTVQNKEPNHFLEHFQGRMVVFKGSRPNATTEVSLENLSSSLQGLYHVRGTEPINIHSIQVEKAISSLDSNDSFILVNFKNTISYIWVGKYSDEKEAALQISSNVFTGYNFQLIDEGDETSEFWESLETNSSLSLLKDYYTQLRTVEQEKKTRLFQCSNNSGVFKVFEIHDFSQDDLDSDDVMILDNQKQIFVWVGKESSDTEKLMANETALEYIMNAPTHRRDDPIFTIQDGFEPHEFTFNFHAWQVNKTQQDSYKSKLSAILGSNNSGPASPIMLPTSGVTLKPTTAATPKPITTPTVTTPKPITTPTVATLKTVTPAVTLKPTTVTTPSKVATTTNTSTPSPTTITTFYPLSVLKQKTNLPNDIDKSCLHLYLSDEEFLSTFKMTKEIFQKTPAWKTKQLRVDNGLF.

Residues 1–53 (MEPPLELPTQRKRVIPSKFGILKRNAEIEAEKNRENLQQSSCFSHINEIGKEI) are tail. The core stretch occupies residues 54-832 (GLEIWKIIDD…PIMLPTSGVT (779 aa)). Gelsolin-like repeat units lie at residues 64–116 (STIQ…SQET), 204–244 (IRVK…LEKG), 309–366 (IKLY…DQRT), 479–529 (RNKF…EDKG), 603–647 (INIH…KEAA), and 713–754 (FKVF…TEKL). Repeat copies occupy residues 840 to 849 (TPKPITTPTV) and 851 to 860 (TPKPITTPTV). The interval 840–860 (TPKPITTPTVTTPKPITTPTV) is 2 X 10 AA repeats of T-P-K-P-I-T-T-P-T-V. The region spanning 895 to 959 (TTITTFYPLS…KQLRVDNGLF (65 aa)) is the HP domain.

Belongs to the villin/gelsolin family.

It localises to the cytoplasm. Its subcellular location is the cytoskeleton. Caps actin filaments but displays neither severing nor cross-linking nor nucleating activities. Protovillin seems to be a villin precursor with only archaic capping activity. It lacks essential changes in the sequence to allow bundling of actin filaments and consequently the appearance of microvilli. The polypeptide is Protovillin (vilB) (Dictyostelium discoideum (Social amoeba)).